A 277-amino-acid polypeptide reads, in one-letter code: Phycobilisome rod-core linker polypeptide CpcG1 (277 aa).

Residues 11–189 (RTLDQRVVSY…YWRNKEISLS (179 aa)) form the PBS-linker domain.

Belongs to the phycobilisome linker protein family. The phycobilisome is a hemidiscoidal structure that is composed of two distinct substructures: a core complex and a number of rods radiating from the core.

Its subcellular location is the cellular thylakoid membrane. Its function is as follows. Rod-core linker protein required for attachment of phycocyanin to allophycocyanin in cores of phycobilisomes. Linker polypeptides determine the state of aggregation and the location of the disk-shaped phycobiliprotein units within the phycobilisome and modulate their spectroscopic properties in order to mediate a directed and optimal energy transfer. The polypeptide is Phycobilisome rod-core linker polypeptide CpcG1 (cpcG1) (Thermosynechococcus vestitus (strain NIES-2133 / IAM M-273 / BP-1)).